The following is a 145-amino-acid chain: D-aminoacyl-tRNA deacylase (145 aa).

Positions 137–138 match the Gly-cisPro motif, important for rejection of L-amino acids motif; that stretch reads GP.

Belongs to the DTD family. In terms of assembly, homodimer.

It localises to the cytoplasm. It carries out the reaction glycyl-tRNA(Ala) + H2O = tRNA(Ala) + glycine + H(+). The enzyme catalyses a D-aminoacyl-tRNA + H2O = a tRNA + a D-alpha-amino acid + H(+). An aminoacyl-tRNA editing enzyme that deacylates mischarged D-aminoacyl-tRNAs. Also deacylates mischarged glycyl-tRNA(Ala), protecting cells against glycine mischarging by AlaRS. Acts via tRNA-based rather than protein-based catalysis; rejects L-amino acids rather than detecting D-amino acids in the active site. By recycling D-aminoacyl-tRNA to D-amino acids and free tRNA molecules, this enzyme counteracts the toxicity associated with the formation of D-aminoacyl-tRNA entities in vivo and helps enforce protein L-homochirality. The protein is D-aminoacyl-tRNA deacylase of Shewanella halifaxensis (strain HAW-EB4).